The primary structure comprises 228 residues: 2-C-methyl-D-erythritol 4-phosphate cytidylyltransferase (228 aa).

Belongs to the IspD/TarI cytidylyltransferase family. IspD subfamily.

It carries out the reaction 2-C-methyl-D-erythritol 4-phosphate + CTP + H(+) = 4-CDP-2-C-methyl-D-erythritol + diphosphate. It participates in isoprenoid biosynthesis; isopentenyl diphosphate biosynthesis via DXP pathway; isopentenyl diphosphate from 1-deoxy-D-xylulose 5-phosphate: step 2/6. Catalyzes the formation of 4-diphosphocytidyl-2-C-methyl-D-erythritol from CTP and 2-C-methyl-D-erythritol 4-phosphate (MEP). The sequence is that of 2-C-methyl-D-erythritol 4-phosphate cytidylyltransferase from Actinobacillus pleuropneumoniae serotype 5b (strain L20).